We begin with the raw amino-acid sequence, 254 residues long: Triosephosphate isomerase (254 aa).

12-14 provides a ligand contact to substrate; it reads NWK. His-99 (electrophile) is an active-site residue. Glu-169 functions as the Proton acceptor in the catalytic mechanism. Substrate is bound by residues Gly-175, Ser-214, and 235 to 236; that span reads GG.

This sequence belongs to the triosephosphate isomerase family. In terms of assembly, homodimer.

It is found in the cytoplasm. It catalyses the reaction D-glyceraldehyde 3-phosphate = dihydroxyacetone phosphate. It functions in the pathway carbohydrate biosynthesis; gluconeogenesis. It participates in carbohydrate degradation; glycolysis; D-glyceraldehyde 3-phosphate from glycerone phosphate: step 1/1. Functionally, involved in the gluconeogenesis. Catalyzes stereospecifically the conversion of dihydroxyacetone phosphate (DHAP) to D-glyceraldehyde-3-phosphate (G3P). This Brucella abortus biovar 1 (strain 9-941) protein is Triosephosphate isomerase.